A 128-amino-acid polypeptide reads, in one-letter code: Small ribosomal subunit protein uS11 (128 aa).

Belongs to the universal ribosomal protein uS11 family. Part of the 30S ribosomal subunit. Interacts with proteins S7 and S18. Binds to IF-3.

In terms of biological role, located on the platform of the 30S subunit, it bridges several disparate RNA helices of the 16S rRNA. Forms part of the Shine-Dalgarno cleft in the 70S ribosome. The protein is Small ribosomal subunit protein uS11 of Solidesulfovibrio magneticus (strain ATCC 700980 / DSM 13731 / RS-1) (Desulfovibrio magneticus).